A 774-amino-acid polypeptide reads, in one-letter code: Alpha,alpha-trehalose phosphorylase (774 aa).

369–370 (WD) lines the substrate pocket. E498 acts as the Proton donor in catalysis. 610–611 (KQ) lines the substrate pocket.

The protein belongs to the glycosyl hydrolase 65 family. In terms of assembly, homodimer.

The catalysed reaction is alpha,alpha-trehalose + phosphate = beta-D-glucose 1-phosphate + D-glucose. The protein operates within glycan degradation; trehalose degradation. With respect to regulation, inhibited by Cu(2+), Hg(2+), Mg(2+), Mn(2+), Pb(2+) and Zn(2+). In terms of biological role, catalyzes the reversible phosphorolytic cleavage of trehalose. Phosphorolysis is specific for trehalose, but D-xylose, D-galactose, L-arabinose, D-fucose, L-fucose, D-glucosamine and 2-deoxy D-glucose can act as substitutes for D-glucose in the synthetic reaction. The chain is Alpha,alpha-trehalose phosphorylase (treP) from Thermoanaerobacter brockii (Thermoanaerobium brockii).